A 357-amino-acid chain; its full sequence is 3'(2'),5'-bisphosphate nucleotidase (357 aa).

The active-site Proton acceptor is the Asp49. The Mg(2+) site is built by Glu72, Asp142, Ile144, and Asp145. Thr147 acts as the Proton acceptor in catalysis. Residues Thr147, His241, Ser264, Lys267, Arg281, and Asp294 each coordinate adenosine 3',5'-bisphosphate. AMP-binding residues include His241, Ser264, Lys267, Arg281, and Asp294. Asp294 lines the Mg(2+) pocket.

The protein belongs to the inositol monophosphatase superfamily. Mg(2+) serves as cofactor.

The protein resides in the cytoplasm. Its subcellular location is the nucleus. The catalysed reaction is 3'-phosphoadenylyl sulfate + H2O = adenosine 5'-phosphosulfate + phosphate. It catalyses the reaction adenosine 3',5'-bisphosphate + H2O = AMP + phosphate. It carries out the reaction adenosine 2',5'-bisphosphate + H2O = AMP + phosphate. With respect to regulation, phosphatase activity is very sensitive to lithium and moderately sensitive to sodium. The inhibitory effects of lithium and sodium are overcome by high concentrations of potassium. Lithium exerts its inhibitory action by blocking the products of the PAP hydrolysis at the active site. Its function is as follows. Phosphatase that converts adenosine 3'-phosphate 5'-phosphosulfate (PAPS) to adenosine 5'-phosphosulfate (APS) and 3'(2')-phosphoadenosine 5'-phosphate (PAP) to AMP. May regulate the flux of sulfur in the sulfur-activation pathway by converting PAPS to APS. Involved in salt tolerance. Confers resistance to lithium. Shows no activity on inositol mono- and diphosphates, 3'-AMP, AMP, nicotinamide adenine dinucleotide phosphate (NADP), and p-nitrophenylphosphate. This Saccharomyces cerevisiae (strain ATCC 204508 / S288c) (Baker's yeast) protein is 3'(2'),5'-bisphosphate nucleotidase (MET22).